The primary structure comprises 37 residues: Large ribosomal subunit protein bL36 (37 aa).

It belongs to the bacterial ribosomal protein bL36 family.

The polypeptide is Large ribosomal subunit protein bL36 (Psychromonas ingrahamii (strain DSM 17664 / CCUG 51855 / 37)).